The primary structure comprises 194 residues: MRLERLNYNKIKIFLTLDDLTDRGLTKEDLWKDSFKVHQLFKDMMNEANTELGFEANGPIAVEVYSLQAQGMVVIVTKNQDADSEDDEYDDDYIEMQVKLDESADIIYQFHSFEDIIQLSESLQRIGITGGTVYHYDGQYFLSLEDLGSHTAEGVVAVLAEYGNPTTLTIYRLQEYGKLIMDGNAVETIQTHFS.

It belongs to the MecA family. Homodimer.

Its function is as follows. Enables the recognition and targeting of unfolded and aggregated proteins to the ClpC protease or to other proteins involved in proteolysis. Also involved in Spx degradation by ClpC. Acts negatively in the development of competence by binding ComK and recruiting it to the ClpCP protease. When overexpressed, inhibits sporulation. In Bacillus subtilis (strain 168), this protein is Adapter protein MecA 2 (mecB).